A 137-amino-acid chain; its full sequence is Cell division protein SepF (137 aa).

The protein belongs to the SepF family. Homodimer. Interacts with FtsZ.

Its subcellular location is the cytoplasm. In terms of biological role, cell division protein that is part of the divisome complex and is recruited early to the Z-ring. Probably stimulates Z-ring formation, perhaps through the cross-linking of FtsZ protofilaments. Its function overlaps with FtsA. The polypeptide is Cell division protein SepF (Carboxydothermus hydrogenoformans (strain ATCC BAA-161 / DSM 6008 / Z-2901)).